The following is a 250-amino-acid chain: 3-deoxy-manno-octulosonate cytidylyltransferase (250 aa).

The protein belongs to the KdsB family.

It localises to the cytoplasm. It carries out the reaction 3-deoxy-alpha-D-manno-oct-2-ulosonate + CTP = CMP-3-deoxy-beta-D-manno-octulosonate + diphosphate. It functions in the pathway nucleotide-sugar biosynthesis; CMP-3-deoxy-D-manno-octulosonate biosynthesis; CMP-3-deoxy-D-manno-octulosonate from 3-deoxy-D-manno-octulosonate and CTP: step 1/1. It participates in bacterial outer membrane biogenesis; lipopolysaccharide biosynthesis. In terms of biological role, activates KDO (a required 8-carbon sugar) for incorporation into bacterial lipopolysaccharide in Gram-negative bacteria. The chain is 3-deoxy-manno-octulosonate cytidylyltransferase from Thioalkalivibrio sulfidiphilus (strain HL-EbGR7).